The following is a 112-amino-acid chain: MTAASEKTTRRFTIDCTKPASDSLISPSDLGAFLQQKIKCYTGKKEKLLHINANGNIVEVDVTGGFIGKQGLKWQIGRFLHMKKLRAFIKIFAQGLDGFELRYINVEEGKEE.

It belongs to the eukaryotic ribosomal protein eL22 family. In terms of assembly, component of the large ribosomal subunit.

Its subcellular location is the cytoplasm. This Encephalitozoon cuniculi (strain GB-M1) (Microsporidian parasite) protein is Large ribosomal subunit protein eL22 (RPL22).